Here is a 291-residue protein sequence, read N- to C-terminus: ATP synthase gamma chain (291 aa).

The protein belongs to the ATPase gamma chain family. As to quaternary structure, F-type ATPases have 2 components, CF(1) - the catalytic core - and CF(0) - the membrane proton channel. CF(1) has five subunits: alpha(3), beta(3), gamma(1), delta(1), epsilon(1). CF(0) has three main subunits: a, b and c.

The protein localises to the cell inner membrane. Produces ATP from ADP in the presence of a proton gradient across the membrane. The gamma chain is believed to be important in regulating ATPase activity and the flow of protons through the CF(0) complex. The chain is ATP synthase gamma chain from Ruegeria sp. (strain TM1040) (Silicibacter sp.).